An 801-amino-acid polypeptide reads, in one-letter code: Probable phosphoketolase (801 aa).

The protein belongs to the XFP family. Thiamine diphosphate is required as a cofactor.

The polypeptide is Probable phosphoketolase (Bradyrhizobium diazoefficiens (strain JCM 10833 / BCRC 13528 / IAM 13628 / NBRC 14792 / USDA 110)).